The chain runs to 460 residues: Chromosomal replication initiator protein DnaA 2 (460 aa).

Residues 1–68 form a domain I, interacts with DnaA modulators region; it reads MRAWEDFLLL…KTSLVNNNGK (68 aa). The domain II stretch occupies residues 68–102; that stretch reads KLIRVHITSLDKTAPFYKEKQIQQEKTAYFTMQYG. A domain III, AAA+ region region spans residues 103-321; that stretch reads NVNPEMTFGN…DALKLLSKRV (219 aa). Gly151, Gly153, Lys154, and Thr155 together coordinate ATP. Residues 322–460 are domain IV, binds dsDNA; the sequence is AYKKLAQQLL…EFFPEEEISC (139 aa).

The protein belongs to the DnaA family. In terms of assembly, oligomerizes as a right-handed, spiral filament on DNA at oriC.

The protein localises to the cytoplasm. Plays an essential role in the initiation and regulation of chromosomal replication. ATP-DnaA binds to the origin of replication (oriC) to initiate formation of the DNA replication initiation complex once per cell cycle. Binds the DnaA box (a 9 base pair repeat at the origin) and separates the double-stranded (ds)DNA. Forms a right-handed helical filament on oriC DNA; dsDNA binds to the exterior of the filament while single-stranded (ss)DNA is stabiized in the filament's interior. The ATP-DnaA-oriC complex binds and stabilizes one strand of the AT-rich DNA unwinding element (DUE), permitting loading of DNA polymerase. After initiation quickly degrades to an ADP-DnaA complex that is not apt for DNA replication. Binds acidic phospholipids. This is Chromosomal replication initiator protein DnaA 2 from Chlamydia caviae (strain ATCC VR-813 / DSM 19441 / 03DC25 / GPIC) (Chlamydophila caviae).